We begin with the raw amino-acid sequence, 208 residues long: Ribosomal RNA large subunit methyltransferase E (208 aa).

5 residues coordinate S-adenosyl-L-methionine: glycine 61, tryptophan 63, aspartate 81, aspartate 97, and aspartate 122. The active-site Proton acceptor is lysine 162.

The protein belongs to the class I-like SAM-binding methyltransferase superfamily. RNA methyltransferase RlmE family.

The protein localises to the cytoplasm. The enzyme catalyses uridine(2552) in 23S rRNA + S-adenosyl-L-methionine = 2'-O-methyluridine(2552) in 23S rRNA + S-adenosyl-L-homocysteine + H(+). In terms of biological role, specifically methylates the uridine in position 2552 of 23S rRNA at the 2'-O position of the ribose in the fully assembled 50S ribosomal subunit. The sequence is that of Ribosomal RNA large subunit methyltransferase E from Pseudomonas putida (strain GB-1).